The following is a 192-amino-acid chain: AYSWDNRVKYIVRYMYDIDNDGFLDKNDFECLAVRVTLIEGRGEFSPEGYAKNKEIMANLWNEIAELADFNKDGEVTVDEFKQAVQKNCKGKAFANFPNAFKVFIGNQFKTIDVDGDGMVGVDEYRLDCITRSAFADVKEIDDAYDKLCTEEDKKAGGINLARYQELYAQFISNEDEKNNACYLFGPLKEVQ.

Ala1 bears the N-acetylalanine mark. 4 consecutive EF-hand domains span residues 4–39 (WDNR…VTLI), 56–91 (IMAN…NCKG), 100–135 (AFKV…RSAF), and 136–171 (ADVK…YAQF). The Ca(2+) site is built by Asp17, Asp19, Asp21, Asp28, Asp69, Asn71, Asp73, Glu75, Glu80, Asp113, Asp115, Asp117, Met119, and Glu124.

As to quaternary structure, SCPs from crayfish, lobster, and shrimp are polymorphic dimers; three isotypes (alpha-alpha, alpha-beta, and beta-beta) have been identified.

Its function is as follows. Like parvalbumins, SCPs seem to be more abundant in fast contracting muscles, but no functional relationship can be established from this distribution. This chain is Sarcoplasmic calcium-binding protein, beta chain, found in Penaeus sp. (Penoeid shrimp).